We begin with the raw amino-acid sequence, 100 residues long: MTLTKAELADILVDKVSNVTKNDAKEIVELFFEEIRSTLASGEEIKISGFGNFQLRDKPQRPGRNPKTGEEVPITARRVVTFHASQKLKSMVEHYYDKQR.

Positions 53–72 (FQLRDKPQRPGRNPKTGEEV) are disordered.

Belongs to the bacterial histone-like protein family. As to quaternary structure, heterodimer of an alpha and a beta chain.

Functionally, this protein is one of the two subunits of integration host factor, a specific DNA-binding protein that functions in genetic recombination as well as in transcriptional and translational control. The protein is Integration host factor subunit alpha of Neisseria meningitidis serogroup C (strain 053442).